Consider the following 217-residue polypeptide: Adenylate kinase (217 aa).

10–15 contributes to the ATP binding site; the sequence is GIGKGT. The interval 30 to 59 is NMP; the sequence is STGDIFRKNFKENTELGTLSKKFIAQGLLV. Residues Thr-31, Arg-36, 57 to 59, 85 to 88, and Gln-92 contribute to the AMP site; these read LLV and GFPR. Positions 126 to 163 are LID; the sequence is GRRICPECGKVYHIEKIPPKNPGICDKDQKTLIQREDD. Arg-127 is a binding site for ATP. Zn(2+)-binding residues include Cys-130 and Cys-133. Position 136-137 (136-137) interacts with ATP; that stretch reads VY. The Zn(2+) site is built by Cys-150 and Asp-153. The AMP site is built by Arg-160 and Arg-171. Gln-199 lines the ATP pocket.

Belongs to the adenylate kinase family. In terms of assembly, monomer.

It localises to the cytoplasm. It catalyses the reaction AMP + ATP = 2 ADP. It participates in purine metabolism; AMP biosynthesis via salvage pathway; AMP from ADP: step 1/1. In terms of biological role, catalyzes the reversible transfer of the terminal phosphate group between ATP and AMP. Plays an important role in cellular energy homeostasis and in adenine nucleotide metabolism. The protein is Adenylate kinase of Aster yellows witches'-broom phytoplasma (strain AYWB).